Reading from the N-terminus, the 277-residue chain is Probable endonuclease 4 (277 aa).

Residues His-67, His-107, Glu-142, Asp-176, His-179, His-211, Asp-224, His-226, and Glu-256 each coordinate Zn(2+).

The protein belongs to the AP endonuclease 2 family. Requires Zn(2+) as cofactor.

It carries out the reaction Endonucleolytic cleavage to 5'-phosphooligonucleotide end-products.. In terms of biological role, endonuclease IV plays a role in DNA repair. It cleaves phosphodiester bonds at apurinic or apyrimidinic (AP) sites, generating a 3'-hydroxyl group and a 5'-terminal sugar phosphate. This is Probable endonuclease 4 from Clostridium beijerinckii (strain ATCC 51743 / NCIMB 8052) (Clostridium acetobutylicum).